Consider the following 130-residue polypeptide: Small ribosomal subunit protein uS11c (130 aa).

The protein belongs to the universal ribosomal protein uS11 family. In terms of assembly, part of the 30S ribosomal subunit.

The protein resides in the plastid. The protein localises to the chloroplast. The polypeptide is Small ribosomal subunit protein uS11c (Bigelowiella natans (Pedinomonas minutissima)).